The primary structure comprises 708 residues: Radial spoke head protein 6 homolog A (708 aa).

4 disordered regions span residues 1 to 94, 376 to 407, 495 to 514, and 663 to 708; these read MGEP…GYTP, ETHG…IIPK, EEEG…FEEN, and GPEI…DLED. A compositionally biased stretch (polar residues) spans 10–32; the sequence is PSQTRRASQGSERARSQEYSQPL. The span at 47 to 56 shows a compositional bias: low complexity; the sequence is RGSRSSQGSQ. Over residues 495 to 504 the composition is skewed to acidic residues; it reads EEEGDEEEEG. Low complexity predominate over residues 680–690; the sequence is LKAAQEQALAA. Over residues 691–708 the composition is skewed to acidic residues; that stretch reads AEEEEEDEEEEEDEDLED.

It belongs to the flagellar radial spoke RSP4/6 family. As to quaternary structure, component of the axonemal radial spoke 1 (RS1) and 2 (RS2) complexes, at least composed of spoke head proteins RSPH1, RSPH3, RSPH9 and the cilia-specific component RSPH4A or sperm-specific component RSPH6A, spoke stalk proteins RSPH14, DNAJB13, DYDC1, ROPN1L and NME5, and the RS1 complex-specific anchor protein IQUB. Interacts with RSPH1. Interacts with RSPH3B. Interacts with RSPH4A. Interacts with RSPH9. Interacts with RSPH10B. Phosphorylated by PKA. Phosphorylation increases in capacitated sperm. In terms of tissue distribution, expressed in sperm and testis (at protein level).

Its subcellular location is the cytoplasm. It is found in the cytoskeleton. It localises to the flagellum axoneme. Functions as part of radial spoke complexes in the axoneme of sperm flagella that play an important part in motility. The triple radial spokes (RS1, RS2 and RS3) are required to modulate beating of the sperm flagellum. This is Radial spoke head protein 6 homolog A from Mus musculus (Mouse).